Consider the following 69-residue polypeptide: uncharacterized protein (69 aa).

A CHCH domain is found at 6 to 56 (SEECTPAKKKYDACFNDWYANKFLKGDLHNRDCDELFAEYKSCLLKALKTK). 2 short sequence motifs (cx9C motif) span residues 9–19 (CTPAKKKYDAC) and 38–48 (CDELFAEYKSC). 2 cysteine pairs are disulfide-bonded: C9-C48 and C19-C38.

It belongs to the TRIAP1/MDM35 family.

This is an uncharacterized protein from Schizosaccharomyces pombe (strain 972 / ATCC 24843) (Fission yeast).